The sequence spans 674 residues: Enzymatic polyprotein (674 aa).

The interval 40–130 (IELHCFVDTG…CQLYEPFIQF (91 aa)) is protease. D47 is an active-site residue. A Reverse transcriptase domain is found at 267-447 (LKVIKPSKSP…KKINFLGLEI (181 aa)).

It belongs to the caulimoviridae enzymatic polyprotein family.

It carries out the reaction DNA(n) + a 2'-deoxyribonucleoside 5'-triphosphate = DNA(n+1) + diphosphate. Its function is as follows. Encodes for at least two polypeptides: protease (PR) and reverse transcriptase (RT). The protease processes the polyprotein in cis. Reverse transcriptase is multifunctional enzyme that converts the viral RNA genome into dsDNA in viral cytoplasmic capsids. This enzyme displays a DNA polymerase activity that can copy either DNA or RNA templates, and a ribonuclease H (RNase H) activity that cleaves the RNA strand of RNA-DNA heteroduplexes in a partially processive 3'- to 5'-endonucleasic mode. Neo-synthesized pregenomic RNA (pgRNA) are encapsidated, and reverse-transcribed inside the nucleocapsid. Partial (+)DNA is synthesized from the (-)DNA template and generates the relaxed circular DNA (RC-DNA) genome. After budding and infection, the RC-DNA migrates in the nucleus, and is converted into a plasmid-like covalently closed circular DNA (cccDNA). In Arabidopsis thaliana (Mouse-ear cress), this protein is Enzymatic polyprotein.